A 344-amino-acid polypeptide reads, in one-letter code: GTP 3',8-cyclase (344 aa).

The Radical SAM core domain maps to 19 to 245; the sequence is PFGRAVTYLR…DIPYRTGGPA (227 aa). GTP is bound at residue Arg28. Positions 35 and 39 each coordinate [4Fe-4S] cluster. S-adenosyl-L-methionine is bound at residue Tyr41. [4Fe-4S] cluster is bound at residue Cys42. Arg77 provides a ligand contact to GTP. Gly81 provides a ligand contact to S-adenosyl-L-methionine. Residue Thr111 coordinates GTP. Ser135 contacts S-adenosyl-L-methionine. Lys171 lines the GTP pocket. Met205 serves as a coordination point for S-adenosyl-L-methionine. The [4Fe-4S] cluster site is built by Cys268 and Cys271. GTP is bound at residue 273-275; the sequence is RVR. Cys285 contributes to the [4Fe-4S] cluster binding site.

It belongs to the radical SAM superfamily. MoaA family. Monomer and homodimer. The cofactor is [4Fe-4S] cluster.

The catalysed reaction is GTP + AH2 + S-adenosyl-L-methionine = (8S)-3',8-cyclo-7,8-dihydroguanosine 5'-triphosphate + 5'-deoxyadenosine + L-methionine + A + H(+). The protein operates within cofactor biosynthesis; molybdopterin biosynthesis. In terms of biological role, catalyzes the cyclization of GTP to (8S)-3',8-cyclo-7,8-dihydroguanosine 5'-triphosphate. This is GTP 3',8-cyclase from Brucella canis (strain ATCC 23365 / NCTC 10854 / RM-666).